The primary structure comprises 380 residues: Cytochrome b (380 aa).

A run of 4 helical transmembrane segments spans residues 33-53 (FGSLLGLCLMIQILTGLFLAM), 77-98 (WLIRYMHANGASMFFICLFLHV), 113-133 (WNMGIVLLFAVMATAFMGYVL), and 178-198 (FFAFHFILPFIITALVLVHLL). Heme b contacts are provided by His83 and His97. Heme b is bound by residues His182 and His196. A ubiquinone is bound at residue His201. Transmembrane regions (helical) follow at residues 226–246 (IKDLLGALLLLTALMILVLFF), 288–308 (LGGVLALILSILILAFMPLLH), 320–340 (ITQTMYWILVSDLLILTWIGG), and 347–367 (FIMIGQVASITYFAIIVIFMP).

This sequence belongs to the cytochrome b family. As to quaternary structure, the cytochrome bc1 complex contains 11 subunits: 3 respiratory subunits (MT-CYB, CYC1 and UQCRFS1), 2 core proteins (UQCRC1 and UQCRC2) and 6 low-molecular weight proteins (UQCRH/QCR6, UQCRB/QCR7, UQCRQ/QCR8, UQCR10/QCR9, UQCR11/QCR10 and a cleavage product of UQCRFS1). This cytochrome bc1 complex then forms a dimer. It depends on heme b as a cofactor.

Its subcellular location is the mitochondrion inner membrane. Its function is as follows. Component of the ubiquinol-cytochrome c reductase complex (complex III or cytochrome b-c1 complex) that is part of the mitochondrial respiratory chain. The b-c1 complex mediates electron transfer from ubiquinol to cytochrome c. Contributes to the generation of a proton gradient across the mitochondrial membrane that is then used for ATP synthesis. This Synaptomys borealis (Northern bog lemming) protein is Cytochrome b (MT-CYB).